The following is a 681-amino-acid chain: Methionine--tRNA ligase (681 aa).

The short motif at 14-24 (PYANGSIHLGH) is the 'HIGH' region element. Zn(2+) contacts are provided by Cys145, Cys148, Cys158, and Cys161. A 'KMSKS' region motif is present at residues 331–335 (KMSKS). Residue Lys334 participates in ATP binding. Positions 579–681 (AFAAIDLRVA…SGAKPGQRIK (103 aa)) constitute a tRNA-binding domain.

The protein belongs to the class-I aminoacyl-tRNA synthetase family. MetG type 1 subfamily. As to quaternary structure, homodimer. The cofactor is Zn(2+).

The protein localises to the cytoplasm. It carries out the reaction tRNA(Met) + L-methionine + ATP = L-methionyl-tRNA(Met) + AMP + diphosphate. Functionally, is required not only for elongation of protein synthesis but also for the initiation of all mRNA translation through initiator tRNA(fMet) aminoacylation. This is Methionine--tRNA ligase from Pseudomonas fluorescens (strain ATCC BAA-477 / NRRL B-23932 / Pf-5).